A 410-amino-acid polypeptide reads, in one-letter code: uncharacterized protein (410 aa).

Residues 178 to 187 (QKNHRNQLST) show a composition bias toward polar residues. Disordered regions lie at residues 178-203 (QKNH…QEHQ) and 236-272 (RAEQ…PTVQ). Residues 188–198 (QKKQQQALQKA) are compositionally biased toward low complexity. Basic and acidic residues predominate over residues 236–263 (RAEQAAREQEKREREALAQRQKAEEKRT).

This is an uncharacterized protein from Haemophilus influenzae (strain ATCC 51907 / DSM 11121 / KW20 / Rd).